The chain runs to 185 residues: Peptidyl-tRNA hydrolase (185 aa).

A tRNA-binding site is contributed by Tyr14. The active-site Proton acceptor is the His19. TRNA is bound by residues Tyr64, Asn66, and Asn112.

The protein belongs to the PTH family. As to quaternary structure, monomer.

The protein localises to the cytoplasm. It catalyses the reaction an N-acyl-L-alpha-aminoacyl-tRNA + H2O = an N-acyl-L-amino acid + a tRNA + H(+). Hydrolyzes ribosome-free peptidyl-tRNAs (with 1 or more amino acids incorporated), which drop off the ribosome during protein synthesis, or as a result of ribosome stalling. Its function is as follows. Catalyzes the release of premature peptidyl moieties from peptidyl-tRNA molecules trapped in stalled 50S ribosomal subunits, and thus maintains levels of free tRNAs and 50S ribosomes. This is Peptidyl-tRNA hydrolase from Lactobacillus acidophilus (strain ATCC 700396 / NCK56 / N2 / NCFM).